A 205-amino-acid chain; its full sequence is GTP cyclohydrolase 1 (205 aa).

Positions 93, 96, and 166 each coordinate Zn(2+).

This sequence belongs to the GTP cyclohydrolase I family. As to quaternary structure, homomer.

It carries out the reaction GTP + H2O = 7,8-dihydroneopterin 3'-triphosphate + formate + H(+). It functions in the pathway cofactor biosynthesis; 7,8-dihydroneopterin triphosphate biosynthesis; 7,8-dihydroneopterin triphosphate from GTP: step 1/1. The sequence is that of GTP cyclohydrolase 1 from Mycobacterium leprae (strain Br4923).